Reading from the N-terminus, the 334-residue chain is Beta-glucanase (334 aa).

An N-terminal signal peptide occupies residues 1–27 (MKNRVISLLMASLLLVLSVIVAPFYKA). Residues 28–248 (EAATVVNTPF…YVKYYPNGVP (221 aa)) form the GH16 domain. The active-site Nucleophile is the Glu136. The Proton donor role is filled by Glu140. The Dockerin domain occupies 267 to 334 (NLPLKGDVNG…RYLIRAIPSL (68 aa)).

It belongs to the glycosyl hydrolase 16 family. In terms of assembly, may form part of a multienzyme complex (cellulosome).

It carries out the reaction Hydrolysis of (1-&gt;4)-beta-D-glucosidic linkages in beta-D-glucans containing (1-&gt;3)- and (1-&gt;4)-bonds.. In Acetivibrio thermocellus (strain ATCC 27405 / DSM 1237 / JCM 9322 / NBRC 103400 / NCIMB 10682 / NRRL B-4536 / VPI 7372) (Clostridium thermocellum), this protein is Beta-glucanase (licB).